The primary structure comprises 633 residues: Transcriptional repressor p66-alpha (633 aa).

A compositionally biased stretch (basic and acidic residues) spans 1–18; sequence MTEEACRTRSQKRALERD. Disordered stretches follow at residues 1–59 and 73–119; these read MTEE…PTQG and RGEG…RVNG. Residues T20 and T49 each carry the phosphothreonine modification. The segment covering 86 to 99 has biased composition (basic and acidic residues); the sequence is RTSHSDMKSERRPP. K93 is covalently cross-linked (Glycyl lysine isopeptide (Lys-Gly) (interchain with G-Cter in SUMO2)). Phosphoserine is present on residues S100, S107, S113, S114, and S137. Residues 108 to 119 are compositionally biased toward polar residues; that stretch reads DNEQPSSPRVNG. Positions 139–174 form a coiled coil; sequence EERERMIKQLKEELRLEEAKLVLLKKLRQSQIQKEA. The tract at residues 144-178 is CR1; interaction with HDAC1, HDAC2, MBD2 and MTA2; the sequence is MIKQLKEELRLEEAKLVLLKKLRQSQIQKEATAQK. Positions 172–188 are enriched in polar residues; the sequence is KEATAQKPTGSVGSTVT. Residues 172–238 are disordered; the sequence is KEATAQKPTG…QASSKLGPQA (67 aa). K178 is covalently cross-linked (Glycyl lysine isopeptide (Lys-Gly) (interchain with G-Cter in SUMO2)). The interval 181–295 is interaction with ZMYND8; it reads GSVGSTVTTP…IIQQGLIRVA (115 aa). T189 carries the phosphothreonine modification. Polar residues predominate over residues 196 to 212; that stretch reads GTQNIPAGKPSLQTSSA. A Glycyl lysine isopeptide (Lys-Gly) (interchain with G-Cter in SUMO2) cross-link involves residue K204. At R225 the chain carries Omega-N-methylarginine. The segment covering 228–238 has biased composition (polar residues); sequence QQASSKLGPQA. A Glycyl lysine isopeptide (Lys-Gly) (interchain with G-Cter in SUMO2) cross-link involves residue K233. Omega-N-methylarginine occurs at positions 249, 258, and 273. S275 bears the Phosphoserine mark. Position 285 is an omega-N-methylarginine (R285). Phosphoserine occurs at positions 340 and 343. The CR2; histone tail-binding and interaction with CHD4 and CDK2AP1 stretch occupies residues 340–480; sequence SPASRQAAAK…EIEQRLLQQG (141 aa). A GATA-type zinc finger spans residues 411–464; the sequence is SREPYMCAQCKTDFTCRWREEKSGAIMCENCMTTNQKKALKVEHTSRLKAAFVK. Glycyl lysine isopeptide (Lys-Gly) (interchain with G-Cter in SUMO2) cross-links involve residues K464 and K487. S512 carries the phosphoserine modification. R539 is modified (asymmetric dimethylarginine; alternate). R539 carries the post-translational modification Omega-N-methylarginine; alternate. Residues S546 and S548 each carry the phosphoserine modification. A Glycyl lysine isopeptide (Lys-Gly) (interchain with G-Cter in SUMO2) cross-link involves residue K550. S556 is subject to Phosphoserine. Residues 561-585 form a disordered region; it reads VSRTGRHSERTVSAGKGSATSNWKK. A Glycyl lysine isopeptide (Lys-Gly) (interchain with G-Cter in SUMO2) cross-link involves residue K585. At S598 the chain carries Phosphoserine. A Glycyl lysine isopeptide (Lys-Gly) (interchain with G-Cter in SUMO2) cross-link involves residue K605.

As to quaternary structure, homooligomer. Component of the nucleosome remodeling and deacetylase (NuRD) repressor complex, composed of core proteins MTA1, MTA2, MTA3, RBBP4, RBBP7, HDAC1, HDAC2, MBD2, MBD3, and peripherally associated proteins CDK2AP1, CDK2AP2, GATAD2A, GATAD2B, CHD3, CHD4 and CHD5. The exact stoichiometry of the NuRD complex is unknown, and some subunits such as MBD2 and MBD3, GATAD2A and GATAD2B, and CHD3, CHD4 and CHD5 define mutually exclusive NuRD complexes. Component of the MeCP1 histone deacetylase complex. Interacts with CDK2AP1. Interacts with CHD4. Interacts with ERCC6. Interacts with HDAC1. Interacts with HDAC2. Interacts with MBD2; this interaction is required for the enhancement of MBD2-mediated repression and for targeting to the chromatin. Interacts with MBD3. Interacts with MTA2. Interacts with ZMYND8. Interacts with histone tails, including that of histones H2A, H2B, H3 and H4, the interaction is reduced by histone acetylation. In terms of tissue distribution, ubiquitous, both in fetal and adult tissues.

The protein localises to the nucleus speckle. Its subcellular location is the nucleus. It is found in the chromosome. Its function is as follows. Transcriptional repressor. Acts as a component of the histone deacetylase NuRD complex which participates in the remodeling of chromatin. Enhances MBD2-mediated repression. Efficient repression requires the presence of GATAD2B. The polypeptide is Transcriptional repressor p66-alpha (GATAD2A) (Homo sapiens (Human)).